The following is a 615-amino-acid chain: Sodium-coupled neutral amino acid transporter 9 homolog (615 aa).

Residues 1 to 165 lie on the Cytoplasmic side of the membrane; that stretch reads MPPFFAEFTE…LKDVSGKQGS (165 aa). The tract at residues 41 to 65 is disordered; sequence VDDNDTDPLLDDEPPRRLPPAGGVP. The span at 42-52 shows a compositional bias: acidic residues; sequence DDNDTDPLLDD. Residues 166–186 form a helical membrane-spanning segment; the sequence is IVTIFSIWNTMMGTSLLAMPW. Positions 175–180 are important for arginine binding and amino acid transport; sequence TMMGTS. Topologically, residues 187-192 are lumenal; it reads ALQQAG. A helical transmembrane segment spans residues 193 to 213; sequence LVLGIIIMLSMAAICFYTAYI. Residues 214–246 are Cytoplasmic-facing; the sequence is VIESPKRLQDLSVDPLLAEFSDVCKSLFGRIGE. A helical transmembrane segment spans residues 247–273; the sequence is YCAVVFSVCVLIGGVIVYWVLMSNFLY. Topologically, residues 274-341 are lumenal; it reads YTGAVVYESM…TGDDSWSFDK (68 aa). N-linked (GlcNAc...) asparagine glycosylation is found at N286 and N295. A disulfide bridge links C304 with C478. A helical membrane pass occupies residues 342–358; it reads FWTLRGTVPIYLAFALF. At 359–367 the chain is on the cytoplasmic side; the sequence is PLMNFKSPT. Residues 368–392 traverse the membrane as a helical segment; that stretch reads FFTKFNVLGTISVMYLLMFVFSKLL. The Lumenal segment spans residues 393–413; the sequence is ECGVNMDFSNPKSIHYVQLAN. Residues 414–434 traverse the membrane as a helical segment; sequence MHFPALSGTLTLSYFIHNAVL. At 435–451 the chain is on the cytoplasmic side; the sequence is TILRNQKHPENNARDLS. The helical transmembrane segment at 452-472 threads the bilayer; sequence IGYCLVAFCYVFIGFTFFAAF. Residues 473–491 lie on the Lumenal side of the membrane; it reads PVQRSCISDNFLNNFGAGD. The helical transmembrane segment at 492–512 threads the bilayer; sequence VLSSTARLFLLFQMITVLPLL. Residues 513–533 are Cytoplasmic-facing; it reads MFLVRSQLFYAIFGQTWPGAI. The helical transmembrane segment at 534–554 threads the bilayer; the sequence is RVIILNVLLIAVAVGFATFYP. The Lumenal segment spans residues 555–561; sequence NVGSILR. The helical transmembrane segment at 562–582 threads the bilayer; the sequence is YVGSISGLVYVFALPAMVYIK. The Cytoplasmic portion of the chain corresponds to 583–594; that stretch reads QSEAAGTLTPMK. Residues 595-615 traverse the membrane as a helical segment; sequence KYAHYGIIVIGVANLIAQFVI.

The protein belongs to the amino acid/polyamine transporter 2 family. SLC38A9 subfamily.

The protein resides in the lysosome membrane. It is found in the late endosome membrane. Amino acid transport is sodium-dependent. Transport of leucine, tyrosine and phenylalanine is increased by arginine binding. In terms of biological role, lysosomal amino acid transporter involved in the activation of mTORC1 in response to amino acid levels. Probably acts as an amino acid sensor of the Rag GTPases and Ragulator complexes, 2 complexes involved in amino acid sensing and activation of mTORC1, a signaling complex promoting cell growth in response to growth factors, energy levels, and amino acids. This is Sodium-coupled neutral amino acid transporter 9 homolog from Caenorhabditis elegans.